The primary structure comprises 310 residues: Calcium homeostasis modulator protein 5 (310 aa).

The next 4 membrane-spanning stretches (helical) occupy residues 17–37 (TIGY…FSMV), 49–69 (FPYG…VGFF), 101–121 (LIKV…VALL), and 181–201 (QILG…GTCY).

Belongs to the CALHM family.

It localises to the membrane. Functionally, pore-forming subunit of a voltage-gated ion channel. The chain is Calcium homeostasis modulator protein 5 (calhm5.1) from Danio rerio (Zebrafish).